The chain runs to 161 residues: Regulator of ribonuclease activity A (161 aa).

It belongs to the RraA family. Homotrimer. Binds to both RNA-binding sites in the C-terminal region of Rne and to RhlB.

It localises to the cytoplasm. Globally modulates RNA abundance by binding to RNase E (Rne) and regulating its endonucleolytic activity. Can modulate Rne action in a substrate-dependent manner by altering the composition of the degradosome. Modulates RNA-binding and helicase activities of the degradosome. The sequence is that of Regulator of ribonuclease activity A from Yersinia enterocolitica serotype O:8 / biotype 1B (strain NCTC 13174 / 8081).